The following is a 419-amino-acid chain: UDP-N-acetylglucosamine 1-carboxyvinyltransferase 2 (419 aa).

Phosphoenolpyruvate is bound at residue 22-23 (KN). Arg-92 provides a ligand contact to UDP-N-acetyl-alpha-D-glucosamine. Residue Asp-116 is the Proton donor of the active site. Residues 121 to 125 (RPIDQ), Asp-306, and Leu-328 each bind UDP-N-acetyl-alpha-D-glucosamine.

Belongs to the EPSP synthase family. MurA subfamily.

Its subcellular location is the cytoplasm. The enzyme catalyses phosphoenolpyruvate + UDP-N-acetyl-alpha-D-glucosamine = UDP-N-acetyl-3-O-(1-carboxyvinyl)-alpha-D-glucosamine + phosphate. The protein operates within cell wall biogenesis; peptidoglycan biosynthesis. Cell wall formation. Adds enolpyruvyl to UDP-N-acetylglucosamine. The polypeptide is UDP-N-acetylglucosamine 1-carboxyvinyltransferase 2 (Latilactobacillus sakei subsp. sakei (strain 23K) (Lactobacillus sakei subsp. sakei)).